Here is a 432-residue protein sequence, read N- to C-terminus: Peptidase B (432 aa).

The Mn(2+) site is built by K196 and D201. The active site involves K208. Mn(2+) is bound by residues D219, D278, and E280. R282 is a catalytic residue.

This sequence belongs to the peptidase M17 family. As to quaternary structure, homohexamer. It depends on Mn(2+) as a cofactor.

It localises to the cytoplasm. It carries out the reaction Release of an N-terminal amino acid, Xaa, from a peptide or arylamide. Xaa is preferably Glu or Asp but may be other amino acids, including Leu, Met, His, Cys and Gln.. Its function is as follows. Probably plays an important role in intracellular peptide degradation. The protein is Peptidase B of Yersinia pestis bv. Antiqua (strain Antiqua).